A 144-amino-acid polypeptide reads, in one-letter code: UPF0735 ACT domain-containing protein NT01CX_1681 (144 aa).

Residues 68–143 (TIGFLLSHKA…NVVKVSLIAM (76 aa)) enclose the ACT domain.

Belongs to the UPF0735 family.

This Clostridium novyi (strain NT) protein is UPF0735 ACT domain-containing protein NT01CX_1681.